Consider the following 128-residue polypeptide: MDTTESAESAHNPARPPSRSRCPPSAQPGSEGFWRPWVRTPGEKEKRTGPRAAEALPSGPGMAEASGKLLQYQHPVRLFWPKSKCYDYLYQEAETLLKNFPIQATISFYEDSDSEDEIEGLACENQSN.

Residues 1-64 (MDTTESAESA…ALPSGPGMAE (64 aa)) are disordered. Residues 17 to 28 (PSRSRCPPSAQP) show a composition bias toward low complexity. The WRPW motif signature appears at 34-37 (WRPW). Residues 74–109 (HPVRLFWPKSKCYDYLYQEAETLLKNFPIQATISFY) form a ripply homology domain region.

It belongs to the ripply family. Expressed in the embryonic anterior presomitic mesoderm. First expressed in S-I at 8.5 dpc, where expression is maintained until 13.5 dpc, with an additional stripe of expression sometimes seen in the rostral part of S0 and S-I.

The protein resides in the nucleus. In terms of biological role, plays a role in somitogenesis. Required for somite segregation and establishment of rostrocaudal polarity in somites. The sequence is that of Protein ripply2 from Mus musculus (Mouse).